The primary structure comprises 213 residues: Flagellar transcriptional regulator FlhC (213 aa).

Residues Cys138, Cys141, Cys158, and Cys161 each coordinate Zn(2+).

This sequence belongs to the FlhC family. As to quaternary structure, heterohexamer composed of two FlhC and four FlhD subunits. Each FlhC binds a FlhD dimer, forming a heterotrimer, and a hexamer assembles by dimerization of two heterotrimers. Zn(2+) serves as cofactor.

The protein localises to the cytoplasm. Functionally, functions in complex with FlhD as a master transcriptional regulator that regulates transcription of several flagellar and non-flagellar operons by binding to their promoter region. Activates expression of class 2 flagellar genes, including fliA, which is a flagellum-specific sigma factor that turns on the class 3 genes. Also regulates genes whose products function in a variety of physiological pathways. The protein is Flagellar transcriptional regulator FlhC of Cupriavidus metallidurans (strain ATCC 43123 / DSM 2839 / NBRC 102507 / CH34) (Ralstonia metallidurans).